Consider the following 290-residue polypeptide: MKKKALLPLFLGIMIFLAGCDYSTPEKQDGFFFNTFVQPMKHLLQWLGNDVFHNNFGLAIIVLVLFIRLILLPFMLSNYKNSHMMREKMKVAKPEVDGIQEKVKRARTQEEKMAANQELMEVYKKYDMNPMKSMLGCLPILIQMPIIMGLYFVLKDKLVNGLSEHPHFLWFNLTKPDIWITVIAGVLYFIQAVVSSKTMPQEQRQMGYMMMVISPIMIIWISLQASSALGLYWSVSALFLVIQTHFANIYYSKLAKKEVQPFIEKYEREHNPYSKKKGKNTQVVSKKNKK.

Positions 1-19 are cleaved as a signal peptide; it reads MKKKALLPLFLGIMIFLAG. Residue cysteine 20 is the site of N-palmitoyl cysteine attachment. Cysteine 20 carries S-diacylglycerol cysteine lipidation. Transmembrane regions (helical) follow at residues 56-76, 134-154, 176-196, 211-231, and 232-252; these read FGLA…PFML, MLGC…YFVL, PDIW…VVSS, MVIS…ALGL, and YWSV…IYYS. Residues 270-290 form a disordered region; it reads HNPYSKKKGKNTQVVSKKNKK. Over residues 280-290 the composition is skewed to polar residues; the sequence is NTQVVSKKNKK.

The protein belongs to the OXA1/ALB3/YidC family. Type 2 subfamily.

It localises to the cell membrane. Its function is as follows. Required for the insertion and/or proper folding and/or complex formation of integral membrane proteins into the membrane. Involved in integration of membrane proteins that insert both dependently and independently of the Sec translocase complex, as well as at least some lipoproteins. In Staphylococcus epidermidis (strain ATCC 12228 / FDA PCI 1200), this protein is Membrane protein insertase YidC 1.